We begin with the raw amino-acid sequence, 433 residues long: uncharacterized protein (433 aa).

A helical transmembrane segment spans residues 36–58; sequence YYYYVQLAFKMLVGVLKNLPVVY. Residues 169-433 form a disordered region; the sequence is VRVPSRDLQP…GEGRDLPEDN (265 aa). Acidic residues-rich tracts occupy residues 216 to 227 and 234 to 254; these read GEPGENGDESDE and GDEDAAQSEQNNDDGMDYESD. 3 stretches are compositionally biased toward basic and acidic residues: residues 265-280, 354-364, and 422-433; these read EPDRRHDAEAGERGSE, GGRRPARRDSP, and RRGEGRDLPEDN.

It is found in the host membrane. This is an uncharacterized protein from Psittacid herpesvirus 1 (isolate Amazon parrot/-/97-0001/1997) (PsHV-1).